Here is a 311-residue protein sequence, read N- to C-terminus: ATP synthase subunit a (311 aa).

Transmembrane regions (helical) follow at residues 62-82, 123-143, 170-190, 213-233, 253-273, and 276-296; these read AVHV…GFIF, IAPM…MDLI, DPNA…MFSI, LWYL…VALI, IFIL…VGGV, and WAWA…FMVL.

The protein belongs to the ATPase A chain family. As to quaternary structure, F-type ATPases have 2 components, CF(1) - the catalytic core - and CF(0) - the membrane proton channel. CF(1) has five subunits: alpha(3), beta(3), gamma(1), delta(1), epsilon(1). CF(0) has three main subunits: a(1), b(2) and c(9-12). The alpha and beta chains form an alternating ring which encloses part of the gamma chain. CF(1) is attached to CF(0) by a central stalk formed by the gamma and epsilon chains, while a peripheral stalk is formed by the delta and b chains.

The protein resides in the cell inner membrane. Its function is as follows. Key component of the proton channel; it plays a direct role in the translocation of protons across the membrane. In Saccharophagus degradans (strain 2-40 / ATCC 43961 / DSM 17024), this protein is ATP synthase subunit a.